Consider the following 75-residue polypeptide: Exodeoxyribonuclease 7 small subunit (75 aa).

The protein belongs to the XseB family. As to quaternary structure, heterooligomer composed of large and small subunits.

The protein resides in the cytoplasm. The enzyme catalyses Exonucleolytic cleavage in either 5'- to 3'- or 3'- to 5'-direction to yield nucleoside 5'-phosphates.. In terms of biological role, bidirectionally degrades single-stranded DNA into large acid-insoluble oligonucleotides, which are then degraded further into small acid-soluble oligonucleotides. The polypeptide is Exodeoxyribonuclease 7 small subunit (Thermotoga maritima (strain ATCC 43589 / DSM 3109 / JCM 10099 / NBRC 100826 / MSB8)).